A 221-amino-acid polypeptide reads, in one-letter code: Nuclear phosphoprotein UL3 homolog (221 aa).

Belongs to the alphaherpesvirinae HHV-1 UL3 family. Phosphorylated.

The protein localises to the host nucleus. This Varicella-zoster virus (strain Oka vaccine) (HHV-3) protein is Nuclear phosphoprotein UL3 homolog.